The chain runs to 169 residues: MAALLLRHVGRHCLRAHLSPQLCIRNAVPLGTTAKEEMERFWSKNTTLNRPLSPHISIYGWSLPMAMSICHRGTGIALSAGVSLFGLSALLVPGSFESHLEFVKSLCLGPALIHTAKFALVFPLMYHTWNGIRHLMWDLGKGLTISQLHQSGVAVLVLTVLSSVGLAAM.

The N-terminal 29 residues, 1 to 29 (MAALLLRHVGRHCLRAHLSPQLCIRNAVP), are a transit peptide targeting the mitochondrion. Over 30 to 62 (LGTTAKEEMERFWSKNTTLNRPLSPHISIYGWS) the chain is Mitochondrial matrix. A helical membrane pass occupies residues 63–92 (LPMAMSICHRGTGIALSAGVSLFGLSALLV). The Mitochondrial intermembrane portion of the chain corresponds to 93–112 (PGSFESHLEFVKSLCLGPAL). Residues 113–137 (IHTAKFALVFPLMYHTWNGIRHLMW) traverse the membrane as a helical segment. Residue histidine 127 coordinates heme b. Over 138–144 (DLGKGLT) the chain is Mitochondrial matrix. A helical transmembrane segment spans residues 145-166 (ISQLHQSGVAVLVLTVLSSVGL). The Mitochondrial intermembrane segment spans residues 167 to 169 (AAM).

Belongs to the cytochrome b560 family. Component of complex II composed of four subunits: the flavoprotein (FP) SDHA, iron-sulfur protein (IP) SDHB, and a cytochrome b560 composed of SDHC and SDHD. Heme b is required as a cofactor. In terms of processing, the N-terminus is blocked.

Its subcellular location is the mitochondrion inner membrane. Its pathway is carbohydrate metabolism; tricarboxylic acid cycle. Its function is as follows. Membrane-anchoring subunit of succinate dehydrogenase (SDH) that is involved in complex II of the mitochondrial electron transport chain and is responsible for transferring electrons from succinate to ubiquinone (coenzyme Q). SDH also oxidizes malate to the non-canonical enol form of oxaloacetate, enol-oxaloacetate. Enol-oxaloacetate, which is a potent inhibitor of the succinate dehydrogenase activity, is further isomerized into keto-oxaloacetate. The chain is Succinate dehydrogenase cytochrome b560 subunit, mitochondrial (SDHC) from Bos taurus (Bovine).